The sequence spans 236 residues: Purine nucleoside phosphorylase DeoD-type (236 aa).

His-5 is an a purine D-ribonucleoside binding site. Phosphate-binding positions include Gly-21, Arg-25, Arg-44, and 88-91 (RIGS). A purine D-ribonucleoside contacts are provided by residues 180–182 (EME) and 204–205 (SD). The active-site Proton donor is Asp-205.

This sequence belongs to the PNP/UDP phosphorylase family. As to quaternary structure, homohexamer; trimer of homodimers.

It carries out the reaction a purine D-ribonucleoside + phosphate = a purine nucleobase + alpha-D-ribose 1-phosphate. The enzyme catalyses a purine 2'-deoxy-D-ribonucleoside + phosphate = a purine nucleobase + 2-deoxy-alpha-D-ribose 1-phosphate. Functionally, catalyzes the reversible phosphorolytic breakdown of the N-glycosidic bond in the beta-(deoxy)ribonucleoside molecules, with the formation of the corresponding free purine bases and pentose-1-phosphate. In Tolumonas auensis (strain DSM 9187 / NBRC 110442 / TA 4), this protein is Purine nucleoside phosphorylase DeoD-type.